A 319-amino-acid polypeptide reads, in one-letter code: 4-hydroxy-3-methylbut-2-enyl diphosphate reductase (319 aa).

Residue cysteine 17 participates in [4Fe-4S] cluster binding. Histidine 46 and histidine 79 together coordinate (2E)-4-hydroxy-3-methylbut-2-enyl diphosphate. Residues histidine 46 and histidine 79 each coordinate dimethylallyl diphosphate. 2 residues coordinate isopentenyl diphosphate: histidine 46 and histidine 79. Cysteine 101 lines the [4Fe-4S] cluster pocket. Histidine 129 is a binding site for (2E)-4-hydroxy-3-methylbut-2-enyl diphosphate. Residue histidine 129 participates in dimethylallyl diphosphate binding. Position 129 (histidine 129) interacts with isopentenyl diphosphate. The Proton donor role is filled by glutamate 131. Threonine 170 is a binding site for (2E)-4-hydroxy-3-methylbut-2-enyl diphosphate. A [4Fe-4S] cluster-binding site is contributed by cysteine 200. (2E)-4-hydroxy-3-methylbut-2-enyl diphosphate is bound by residues serine 228, serine 229, asparagine 230, and serine 273. Residues serine 228, serine 229, asparagine 230, and serine 273 each contribute to the dimethylallyl diphosphate site. Positions 228, 229, 230, and 273 each coordinate isopentenyl diphosphate.

Belongs to the IspH family. [4Fe-4S] cluster is required as a cofactor.

It catalyses the reaction isopentenyl diphosphate + 2 oxidized [2Fe-2S]-[ferredoxin] + H2O = (2E)-4-hydroxy-3-methylbut-2-enyl diphosphate + 2 reduced [2Fe-2S]-[ferredoxin] + 2 H(+). The enzyme catalyses dimethylallyl diphosphate + 2 oxidized [2Fe-2S]-[ferredoxin] + H2O = (2E)-4-hydroxy-3-methylbut-2-enyl diphosphate + 2 reduced [2Fe-2S]-[ferredoxin] + 2 H(+). It functions in the pathway isoprenoid biosynthesis; dimethylallyl diphosphate biosynthesis; dimethylallyl diphosphate from (2E)-4-hydroxy-3-methylbutenyl diphosphate: step 1/1. It participates in isoprenoid biosynthesis; isopentenyl diphosphate biosynthesis via DXP pathway; isopentenyl diphosphate from 1-deoxy-D-xylulose 5-phosphate: step 6/6. In terms of biological role, catalyzes the conversion of 1-hydroxy-2-methyl-2-(E)-butenyl 4-diphosphate (HMBPP) into a mixture of isopentenyl diphosphate (IPP) and dimethylallyl diphosphate (DMAPP). Acts in the terminal step of the DOXP/MEP pathway for isoprenoid precursor biosynthesis. The sequence is that of 4-hydroxy-3-methylbut-2-enyl diphosphate reductase from Cereibacter sphaeroides (strain ATCC 17025 / ATH 2.4.3) (Rhodobacter sphaeroides).